The primary structure comprises 998 residues: tRNA (34-2'-O)-methyltransferase regulator WDR6 (998 aa).

11 WD repeats span residues 148-185 (LYYT…ESDP), 200-239 (AHNG…DWTT), 250-291 (GHSS…ILKR), 294-333 (QFGA…NRPK), 476-515 (NNRE…DDFQ), 527-566 (MGSN…STLR), 567-608 (VSQR…LLQL), 664-704 (RNCN…LSQR), 779-821 (ARLM…QLDL), 826-865 (DIQR…TYFQ), and 868-911 (LHVT…VEQK).

It belongs to the WD repeat WDR6 family. Interacts with Trm7-34.

Its subcellular location is the cytoplasm. Its function is as follows. Together with methyltransferase Trm7-34, methylates the 2'-O-ribose of nucleotides at position 34 of the anticodon loop of substrate tRNAs. The polypeptide is tRNA (34-2'-O)-methyltransferase regulator WDR6 (Drosophila melanogaster (Fruit fly)).